Here is a 637-residue protein sequence, read N- to C-terminus: Neuroendocrine convertase 2 (637 aa).

An N-terminal signal peptide occupies residues 1–24 (MEGGCGSQWKAAGLLFCVMVFASA). Residues 25-108 (ERPVFTNHFL…QQEGFDRKKR (84 aa)) constitute a propeptide that is removed on maturation. The Peptidase S8 domain occupies 128–452 (QWYLFNTGQA…YGVLDAGAMV (325 aa)). Active-site charge relay system residues include aspartate 166 and histidine 207. Cystine bridges form between cysteine 224-cysteine 375 and cysteine 316-cysteine 346. The N-linked (GlcNAc...) asparagine glycan is linked to asparagine 374. The active-site Charge relay system is serine 383. Residues 460–596 (TVPERFHCVG…TLMLHGTQSA (137 aa)) enclose the P/Homo B domain. Cysteine 467 and cysteine 493 are joined by a disulfide. N-linked (GlcNAc...) asparagine glycans are attached at residues asparagine 513 and asparagine 523.

This sequence belongs to the peptidase S8 family. Furin subfamily.

It localises to the cytoplasmic vesicle. The protein localises to the secretory vesicle. The protein resides in the secreted. It catalyses the reaction Release of protein hormones and neuropeptides from their precursors, generally by hydrolysis of -Lys-Arg-|- bonds.. In terms of biological role, serine endopeptidase which is involved in the processing of hormone and other protein precursors at sites comprised of pairs of basic amino acid residues. Responsible for the release of glucagon from proglucagon in pancreatic A cells. The protein is Neuroendocrine convertase 2 (Pcsk2) of Rattus norvegicus (Rat).